The following is a 231-amino-acid chain: 5'-methylthioadenosine/S-adenosylhomocysteine nucleosidase (231 aa).

Glu-12 functions as the Proton acceptor in the catalytic mechanism. Substrate-binding positions include Gly-78, Met-153, and 174–175; that span reads ME. Asp-198 functions as the Proton donor in the catalytic mechanism.

The protein belongs to the PNP/UDP phosphorylase family. MtnN subfamily.

The catalysed reaction is S-adenosyl-L-homocysteine + H2O = S-(5-deoxy-D-ribos-5-yl)-L-homocysteine + adenine. It catalyses the reaction S-methyl-5'-thioadenosine + H2O = 5-(methylsulfanyl)-D-ribose + adenine. The enzyme catalyses 5'-deoxyadenosine + H2O = 5-deoxy-D-ribose + adenine. It participates in amino-acid biosynthesis; L-methionine biosynthesis via salvage pathway; S-methyl-5-thio-alpha-D-ribose 1-phosphate from S-methyl-5'-thioadenosine (hydrolase route): step 1/2. Catalyzes the irreversible cleavage of the glycosidic bond in both 5'-methylthioadenosine (MTA) and S-adenosylhomocysteine (SAH/AdoHcy) to adenine and the corresponding thioribose, 5'-methylthioribose and S-ribosylhomocysteine, respectively. Also cleaves 5'-deoxyadenosine, a toxic by-product of radical S-adenosylmethionine (SAM) enzymes, into 5-deoxyribose and adenine. This chain is 5'-methylthioadenosine/S-adenosylhomocysteine nucleosidase, found in Psychromonas ingrahamii (strain DSM 17664 / CCUG 51855 / 37).